Here is a 142-residue protein sequence, read N- to C-terminus: Large ribosomal subunit protein uL13 (142 aa).

This sequence belongs to the universal ribosomal protein uL13 family. As to quaternary structure, part of the 50S ribosomal subunit.

Its function is as follows. This protein is one of the early assembly proteins of the 50S ribosomal subunit, although it is not seen to bind rRNA by itself. It is important during the early stages of 50S assembly. This Shewanella oneidensis (strain ATCC 700550 / JCM 31522 / CIP 106686 / LMG 19005 / NCIMB 14063 / MR-1) protein is Large ribosomal subunit protein uL13.